The chain runs to 322 residues: Serine/threonine-protein phosphatase PP1 isozyme 6 (322 aa).

N-acetylmethionine is present on Met-1. The Mn(2+) site is built by Asp-61, His-63, Asp-89, and Asn-121. His-122 serves as the catalytic Proton donor. Residues His-170 and His-245 each coordinate Mn(2+). Residues 303–322 (GFNNNVPRPGTPPHKGGKGR) form a disordered region.

The protein belongs to the PPP phosphatase family. PP-1 subfamily. Mn(2+) serves as cofactor. As to expression, strongly up-regulated within developing flowers, especially in the tapetum, the developing and mature pollen and in the ovaries.

Its subcellular location is the nucleus. It is found in the cytoplasm. It catalyses the reaction O-phospho-L-seryl-[protein] + H2O = L-seryl-[protein] + phosphate. It carries out the reaction O-phospho-L-threonyl-[protein] + H2O = L-threonyl-[protein] + phosphate. With respect to regulation, phosphatase activity is strongly reduced by the protein phosphatase inhibitor 2 (I-2). Functionally, serine/threonine-protein phosphatase that possesses phosphatase activity toward para-nitrophenyl phosphate (pNPP) in vitro. The polypeptide is Serine/threonine-protein phosphatase PP1 isozyme 6 (Arabidopsis thaliana (Mouse-ear cress)).